The chain runs to 228 residues: Vesicle transport protein SEC20 (228 aa).

Residues 1 to 199 (MAAPQDVHVR…LITKYNRREL (199 aa)) lie on the Cytoplasmic side of the membrane. Residues 37–90 (LSELTELNTKVKEKFQQLKQRIQELEQSAREQDKESEKQLLLQEVENHKKQMLS) are a coiled coil. Residues 200 to 220 (TDKLLIFLALALFLATVLYIV) form a helical; Anchor for type IV membrane protein membrane-spanning segment. At 221 to 228 (KKRLFPFL) the chain is on the lumenal side.

This sequence belongs to the SEC20 family. In terms of assembly, component of a SNARE complex consisting of STX18, USE1L, BNIP1/SEC20L and SEC22B. Interacts directly with STX18, RINT1/TIP20L and NAPA. Interacts with ZW10 through RINT1. Interacts with BCL2. Interacts with RNF186. Interacts with RNF185. Interacts with SQSTM1; increased by 'Lys-63'-linked polyubiquitination of BNIP1. Post-translationally, polyubiquitinated. 'Lys-63'-linked polyubiquitination by RNF185 increases the interaction with the autophagy receptor SQSTM1. Undergoes 'Lys-29'- and 'Lys-63'-linked polyubiquitination by RNF186 that may regulate BNIP1 localization to the mitochondrion.

The protein localises to the endoplasmic reticulum membrane. Its subcellular location is the mitochondrion membrane. Functionally, as part of a SNARE complex may be involved in endoplasmic reticulum membranes fusion and be required for the maintenance of endoplasmic reticulum organization. Also plays a role in apoptosis. It is for instance required for endoplasmic reticulum stress-induced apoptosis. As a substrate of RNF185 interacting with SQSTM1, might also be involved in mitochondrial autophagy. This is Vesicle transport protein SEC20 from Mus musculus (Mouse).